A 144-amino-acid polypeptide reads, in one-letter code: UPF0102 protein BTH_I3148 (144 aa).

The segment at 1-20 (MCHARAARQATGEAEAAPRD) is disordered.

This sequence belongs to the UPF0102 family.

The sequence is that of UPF0102 protein BTH_I3148 from Burkholderia thailandensis (strain ATCC 700388 / DSM 13276 / CCUG 48851 / CIP 106301 / E264).